The chain runs to 896 residues: Sodium/hydrogen exchanger 5 (896 aa).

Residues methionine 1 to glutamate 45 are Cytoplasmic-facing. A helical membrane pass occupies residues alanine 46–leucine 66. Residues serine 67–leucine 73 are Extracellular-facing. The chain crosses the membrane as a helical span at residues valine 74 to valine 94. The Cytoplasmic segment spans residues alanine 95–glutamate 103. The helical transmembrane segment at proline 104–proline 124 threads the bilayer. The Extracellular portion of the chain corresponds to serine 125–alanine 134. Residues isoleucine 135–tryptophan 155 form a helical membrane-spanning segment. Topologically, residues glycine 156 to aspartate 173 are cytoplasmic. Residues phenylalanine 174–glutamate 194 traverse the membrane as a helical segment. Residues glutamate 195–glutamate 200 lie on the Extracellular side of the membrane. N-linked (GlcNAc...) asparagine glycosylation occurs at asparagine 199. A helical transmembrane segment spans residues threonine 201–tyrosine 221. The Cytoplasmic segment spans residues lysine 222 to serine 246. Residues leucine 247–leucine 267 form a helical membrane-spanning segment. Over threonine 268 to arginine 276 the chain is Extracellular. Residues isoleucine 277–alanine 297 form a helical membrane-spanning segment. Residues serine 298 to threonine 331 lie on the Cytoplasmic side of the membrane. Residues methionine 332–valine 352 traverse the membrane as a helical segment. At aspartate 353–aspartate 360 the chain is on the extracellular side. The helical transmembrane segment at serine 361–leucine 381 threads the bilayer. Residues glutamine 382–aspartate 398 are Cytoplasmic-facing. The chain crosses the membrane as a helical span at residues glutamine 399–leucine 419. Over aspartate 420–aspartate 428 the chain is Extracellular. A helical transmembrane segment spans residues tyrosine 429–isoleucine 449. Residues lysine 450–leucine 896 lie on the Cytoplasmic side of the membrane. The segment at glycine 576 to glycine 721 is required for interaction with ARRB2. 3 disordered regions span residues threonine 658–arginine 686, glutamate 701–glutamate 720, and histidine 818–glutamate 864. Residues serine 660–lysine 672 show a composition bias toward basic residues. Polar residues predominate over residues glutamate 854–glutamate 864.

Belongs to the monovalent cation:proton antiporter 1 (CPA1) transporter (TC 2.A.36) family. Interacts with CHP1 and CHP2. Interacts with ARRB2; facilitates the endocytosis of SLC9A5 from the plasma membrane. Interacts with RACK1; this interaction positively regulates SLC9A5 activity and promotes SLC9A5 localization to focal adhesions. Interacts with SCAMP2; this interaction regulates SLC9A5 cell-surface targeting and SLC9A5 activity. Post-translationally, phosphorylated by PRKAA2; promotes its accumulation at the cell surface. Phosphorylated by CSNK2A1 in a manner favoring its beta-arrestin binding and endocytosis. As to expression, mainly expressed in brain. Expressed in neurons of the central and peripheral nervous system. Expressed also in testis, spleen, and skeletal muscle.

The protein resides in the cell membrane. Its subcellular location is the recycling endosome membrane. It localises to the cell projection. It is found in the dendritic spine membrane. The protein localises to the synaptic cell membrane. The protein resides in the cell junction. Its subcellular location is the focal adhesion. It carries out the reaction Na(+)(in) + H(+)(out) = Na(+)(out) + H(+)(in). With respect to regulation, ATP-depletion almost completely abolishes SLC9A5 activity. Inhibited by amiloride compounds. In terms of biological role, plasma membrane Na(+)/H(+) antiporter. Mediates the electroneutral exchange of intracellular H(+) ions for extracellular Na(+) in 1:1 stoichiometry, thus regulating intracellular pH homeostasis, in particular in neural tissues. Acts as a negative regulator of dendritic spine growth. Plays a role in postsynaptic remodeling and signaling. Can also contribute to organellar pH regulation, with consequences for receptor tyrosine kinase trafficking. This is Sodium/hydrogen exchanger 5 from Homo sapiens (Human).